We begin with the raw amino-acid sequence, 642 residues long: Phosphomethylpyrimidine synthase (642 aa).

Residues N235, M264, Y293, H329, 349-351, 390-393, and E429 each bind substrate; these read SRG and DGLR. H433 lines the Zn(2+) pocket. A substrate-binding site is contributed by Y456. H497 contributes to the Zn(2+) binding site. Residues C577, C580, and C585 each contribute to the [4Fe-4S] cluster site.

Belongs to the ThiC family. Homodimer. Requires [4Fe-4S] cluster as cofactor.

The catalysed reaction is 5-amino-1-(5-phospho-beta-D-ribosyl)imidazole + S-adenosyl-L-methionine = 4-amino-2-methyl-5-(phosphooxymethyl)pyrimidine + CO + 5'-deoxyadenosine + formate + L-methionine + 3 H(+). The protein operates within cofactor biosynthesis; thiamine diphosphate biosynthesis. Its function is as follows. Catalyzes the synthesis of the hydroxymethylpyrimidine phosphate (HMP-P) moiety of thiamine from aminoimidazole ribotide (AIR) in a radical S-adenosyl-L-methionine (SAM)-dependent reaction. In Alteromonas mediterranea (strain DSM 17117 / CIP 110805 / LMG 28347 / Deep ecotype), this protein is Phosphomethylpyrimidine synthase.